Here is a 548-residue protein sequence, read N- to C-terminus: MHKGKKNYPNLITSFRMNLKKIILNHDRFSHPERWKTNALLRFTFVYIKFLFDLMIIKNPLRMVGKTYRDAVTALNSLQSNYANIMAIRQTGDRKNTMTLLEMHEWSRRIGYSASDFNKLNIVHITGTKGKGSTAAFTSSILGQYKEQLPRIGLYTSPHLKSVRERIRINGEPISEEKFAKYFFEVWDRLDSTTSSLDKFPHMIPGSKPGYFKFLTLLSFHTFIQEDCKSCVYEVGVGGELDSTNIIEKPIVCGVTLLGIDHTFMLGDTIEEIAWNKGGIFKSGAPAFTVEKQPPQGLTILKERAEERKTTLTEVPPFKQLENVKLGIAGEFQKSNASLAVMLASEILHTSNILEEKIKCSSNASIPEKFIIGLQNTKWEGRCQVLEKGKNVWYIDGAHTKDSMVAASTWFRDTVRLSKRKKILLFNQQSRDANALVNNLYSSVSPEITFDDVIFTTNVTWKSGSYSADLVSMNTSQEDVEKLKVQESLVKNWNKIDDNRAKTHVTASIEEANELIETLYDEPADIFVTGSLHLVGGLLVVFDRIDVK.

Residue 130 to 133 (GKGS) participates in ATP binding. Mg(2+) contacts are provided by S157, E234, and H262. R382 and D396 together coordinate ATP.

This sequence belongs to the folylpolyglutamate synthase family. It depends on a monovalent cation as a cofactor.

Its subcellular location is the mitochondrion inner membrane. The protein resides in the mitochondrion matrix. The protein localises to the cytoplasm. It carries out the reaction (6S)-5,6,7,8-tetrahydrofolyl-(gamma-L-Glu)(n) + L-glutamate + ATP = (6S)-5,6,7,8-tetrahydrofolyl-(gamma-L-Glu)(n+1) + ADP + phosphate + H(+). It functions in the pathway cofactor biosynthesis; tetrahydrofolylpolyglutamate biosynthesis. Catalyzes conversion of folates to polyglutamate derivatives allowing concentration of folate compounds in the cell and the intracellular retention of these cofactors, which are important substrates for most of the folate-dependent enzymes that are involved in one-carbon transfer reactions involved in purine, pyrimidine and amino acid synthesis. Required for methionine synthesis and maintenance of intact mitochondrial DNA. Involved in telomere maintenance. The chain is Folylpolyglutamate synthase from Saccharomyces cerevisiae (strain AWRI796) (Baker's yeast).